The sequence spans 485 residues: Glutamyl-tRNA(Gln) amidotransferase subunit A (485 aa).

Residues K79 and S154 each act as charge relay system in the active site. Residue S178 is the Acyl-ester intermediate of the active site.

Belongs to the amidase family. GatA subfamily. Heterotrimer of A, B and C subunits.

It carries out the reaction L-glutamyl-tRNA(Gln) + L-glutamine + ATP + H2O = L-glutaminyl-tRNA(Gln) + L-glutamate + ADP + phosphate + H(+). Allows the formation of correctly charged Gln-tRNA(Gln) through the transamidation of misacylated Glu-tRNA(Gln) in organisms which lack glutaminyl-tRNA synthetase. The reaction takes place in the presence of glutamine and ATP through an activated gamma-phospho-Glu-tRNA(Gln). The protein is Glutamyl-tRNA(Gln) amidotransferase subunit A of Bacillus licheniformis (strain ATCC 14580 / DSM 13 / JCM 2505 / CCUG 7422 / NBRC 12200 / NCIMB 9375 / NCTC 10341 / NRRL NRS-1264 / Gibson 46).